Reading from the N-terminus, the 183-residue chain is Threonylcarbamoyl-AMP synthase (183 aa).

Positions 1-183 (MNITQIIEKL…LFTNQLVRQG (183 aa)) constitute a YrdC-like domain.

The protein belongs to the SUA5 family. TsaC subfamily.

The protein localises to the cytoplasm. The catalysed reaction is L-threonine + hydrogencarbonate + ATP = L-threonylcarbamoyladenylate + diphosphate + H2O. In terms of biological role, required for the formation of a threonylcarbamoyl group on adenosine at position 37 (t(6)A37) in tRNAs that read codons beginning with adenine. Catalyzes the conversion of L-threonine, HCO(3)(-)/CO(2) and ATP to give threonylcarbamoyl-AMP (TC-AMP) as the acyladenylate intermediate, with the release of diphosphate. The sequence is that of Threonylcarbamoyl-AMP synthase from Histophilus somni (strain 129Pt) (Haemophilus somnus).